The sequence spans 327 residues: uncharacterized protein (327 aa).

The segment at 129–306 (TPLQNQEATT…DNKKTVTTSS (178 aa)) is disordered. Residues 130–144 (PLQNQEATTSPTIES) show a composition bias toward polar residues. Composition is skewed to basic and acidic residues over residues 184-196 (KSVE…DRNV) and 233-276 (TKDE…EKIV).

This is an uncharacterized protein from Caenorhabditis elegans.